The chain runs to 57 residues: Large ribosomal subunit protein bL33 (57 aa).

This sequence belongs to the bacterial ribosomal protein bL33 family.

This chain is Large ribosomal subunit protein bL33, found in Bifidobacterium longum (strain NCC 2705).